The primary structure comprises 120 residues: NAD(P)H-quinone oxidoreductase subunit 3, chloroplastic (120 aa).

3 helical membrane passes run 9–29 (IFWA…LISG), 64–84 (MFAL…PWAM), and 88–108 (VLGV…IVGS).

The protein belongs to the complex I subunit 3 family. NDH is composed of at least 16 different subunits, 5 of which are encoded in the nucleus.

The protein localises to the plastid. Its subcellular location is the chloroplast thylakoid membrane. It carries out the reaction a plastoquinone + NADH + (n+1) H(+)(in) = a plastoquinol + NAD(+) + n H(+)(out). It catalyses the reaction a plastoquinone + NADPH + (n+1) H(+)(in) = a plastoquinol + NADP(+) + n H(+)(out). Functionally, NDH shuttles electrons from NAD(P)H:plastoquinone, via FMN and iron-sulfur (Fe-S) centers, to quinones in the photosynthetic chain and possibly in a chloroplast respiratory chain. The immediate electron acceptor for the enzyme in this species is believed to be plastoquinone. Couples the redox reaction to proton translocation, and thus conserves the redox energy in a proton gradient. This Carica papaya (Papaya) protein is NAD(P)H-quinone oxidoreductase subunit 3, chloroplastic.